The primary structure comprises 345 residues: uncharacterized protein (345 aa).

2 disordered regions span residues 1 to 58 (MPSP…WRGD) and 139 to 165 (KTNS…NSPK). Residues 27-39 (IKGEGSDDGKEKS) are compositionally biased toward basic and acidic residues. Over residues 154 to 165 (KQGSAESKNSPK) the composition is skewed to polar residues.

This sequence belongs to the MG307/MG309/MG338 family.

This is an uncharacterized protein from Mycoplasma pneumoniae (strain ATCC 29342 / M129 / Subtype 1) (Mycoplasmoides pneumoniae).